The following is a 464-amino-acid chain: Soluble pyridine nucleotide transhydrogenase (464 aa).

Residue 35 to 44 coordinates FAD; that stretch reads DSRRQVGGNC.

The protein belongs to the class-I pyridine nucleotide-disulfide oxidoreductase family. FAD is required as a cofactor.

The protein resides in the cytoplasm. The catalysed reaction is NAD(+) + NADPH = NADH + NADP(+). In terms of biological role, conversion of NADPH, generated by peripheral catabolic pathways, to NADH, which can enter the respiratory chain for energy generation. The protein is Soluble pyridine nucleotide transhydrogenase of Pseudomonas syringae pv. syringae (strain B728a).